We begin with the raw amino-acid sequence, 108 residues long: MVKLRLKRIGKKQAPFYRIVVADSRVNRNGQYIELVGTFNPLKDEVKIDNELTLKWLNNGAQPTDTVRSLLSKQGILKALHESKFSKNTQTENKKPVSKKTTKKSKDN.

Positions 82–108 (ESKFSKNTQTENKKPVSKKTTKKSKDN) are disordered. Over residues 96–108 (PVSKKTTKKSKDN) the composition is skewed to basic residues.

It belongs to the bacterial ribosomal protein bS16 family.

This Mycoplasma mycoides subsp. mycoides SC (strain CCUG 32753 / NCTC 10114 / PG1) protein is Small ribosomal subunit protein bS16.